Consider the following 346-residue polypeptide: Phosphate acyltransferase (346 aa).

The protein belongs to the PlsX family. As to quaternary structure, homodimer. Probably interacts with PlsY.

Its subcellular location is the cytoplasm. The enzyme catalyses a fatty acyl-[ACP] + phosphate = an acyl phosphate + holo-[ACP]. The protein operates within lipid metabolism; phospholipid metabolism. In terms of biological role, catalyzes the reversible formation of acyl-phosphate (acyl-PO(4)) from acyl-[acyl-carrier-protein] (acyl-ACP). This enzyme utilizes acyl-ACP as fatty acyl donor, but not acyl-CoA. The sequence is that of Phosphate acyltransferase from Brucella abortus (strain S19).